We begin with the raw amino-acid sequence, 138 residues long: Ribulose bisphosphate carboxylase small subunit (138 aa).

It belongs to the RuBisCO small chain family. In terms of assembly, heterohexadecamer of 8 large and 8 small subunits.

Its subcellular location is the plastid. The protein resides in the chloroplast. Its function is as follows. RuBisCO catalyzes two reactions: the carboxylation of D-ribulose 1,5-bisphosphate, the primary event in carbon dioxide fixation, as well as the oxidative fragmentation of the pentose substrate in the photorespiration process. Both reactions occur simultaneously and in competition at the same active site. Although the small subunit is not catalytic it is essential for maximal activity. In Porphyra purpurea (Red seaweed), this protein is Ribulose bisphosphate carboxylase small subunit.